A 196-amino-acid chain; its full sequence is Inosine triphosphate pyrophosphatase 1 (196 aa).

20 to 25 serves as a coordination point for ITP; it reads TGNDGK. E48 serves as a coordination point for Mg(2+). ITP-binding positions include K61, 77-78, K94, 153-156, K177, and 182-183; these read DT, FGWD, and PR.

Belongs to the HAM1 NTPase family. In terms of assembly, homodimer. Requires Mg(2+) as cofactor. It depends on Mn(2+) as a cofactor.

The protein localises to the cytoplasm. The catalysed reaction is ITP + H2O = IMP + diphosphate + H(+). The enzyme catalyses dITP + H2O = dIMP + diphosphate + H(+). It catalyses the reaction XTP + H2O = XMP + diphosphate + H(+). In terms of biological role, pyrophosphatase that hydrolyzes non-canonical purine nucleotides such as inosine triphosphate (ITP), deoxyinosine triphosphate (dITP) or xanthosine 5'-triphosphate (XTP) to their respective monophosphate derivatives. The enzyme does not distinguish between the deoxy- and ribose forms. Probably excludes non-canonical purines from RNA and DNA precursor pools, thus preventing their incorporation into RNA and DNA and avoiding chromosomal lesions. This chain is Inosine triphosphate pyrophosphatase 1, found in Trypanosoma cruzi (strain CL Brener).